Here is a 138-residue protein sequence, read N- to C-terminus: Small ribosomal subunit protein uS11c (138 aa).

The interval 1–22 is disordered; the sequence is MAKLLPRIGSRKNGRISSRKNA. Over residues 9-22 the composition is skewed to basic residues; the sequence is GSRKNGRISSRKNA.

The protein belongs to the universal ribosomal protein uS11 family. Part of the 30S ribosomal subunit.

The protein resides in the plastid. It is found in the chloroplast. This Populus alba (White poplar) protein is Small ribosomal subunit protein uS11c.